The sequence spans 247 residues: MVTHLEVCIDNIESLHYAIAGGATRIELCSSLALGGLTPSYGFMQQAAKQSSVPVYAMIRPRQGDFFYNEEELDMMRWDIEAAHQSGLDGVVLGVLTQEGDIHIPFATALCEFAQALGLGITFHRAFDQCRNAEQALEDIIHLGCERILTSGLAPSAPAGESVLKSLVEQAQGRIAIMAGAGVNADNARDLVKNTNVQEVHLSGKTTRPSQMTFIAGQSKMGASDVDDFAIPITSTQAIANVAAALK.

It belongs to the CutC family.

Its subcellular location is the cytoplasm. The polypeptide is PF03932 family protein CutC (Vibrio parahaemolyticus serotype O3:K6 (strain RIMD 2210633)).